We begin with the raw amino-acid sequence, 209 residues long: Uracil phosphoribosyltransferase (209 aa).

5-phospho-alpha-D-ribose 1-diphosphate is bound by residues arginine 79, arginine 104, and 131–139 (DPMLATGGS). Uracil contacts are provided by residues isoleucine 194 and 199–201 (GDA). Aspartate 200 contributes to the 5-phospho-alpha-D-ribose 1-diphosphate binding site.

It belongs to the UPRTase family. As to quaternary structure, homodimer. The cofactor is Mg(2+).

It catalyses the reaction UMP + diphosphate = 5-phospho-alpha-D-ribose 1-diphosphate + uracil. It functions in the pathway pyrimidine metabolism; UMP biosynthesis via salvage pathway; UMP from uracil: step 1/1. Its activity is regulated as follows. Allosterically activated by GTP. In terms of biological role, catalyzes the conversion of uracil and 5-phospho-alpha-D-ribose 1-diphosphate (PRPP) to UMP and diphosphate. This Bacillus caldolyticus protein is Uracil phosphoribosyltransferase.